A 94-amino-acid chain; its full sequence is Acylphosphatase (94 aa).

The Acylphosphatase-like domain occupies 5–94; that stretch reads RLTAFVHGHV…PRDVEGFVER (90 aa). Residues Arg-20 and Asn-38 contribute to the active site.

Belongs to the acylphosphatase family.

The catalysed reaction is an acyl phosphate + H2O = a carboxylate + phosphate + H(+). In Corynebacterium glutamicum (strain ATCC 13032 / DSM 20300 / JCM 1318 / BCRC 11384 / CCUG 27702 / LMG 3730 / NBRC 12168 / NCIMB 10025 / NRRL B-2784 / 534), this protein is Acylphosphatase (acyP).